A 409-amino-acid polypeptide reads, in one-letter code: MLLWLIFFTPGWTLIDGSEMQRDFTWHLRKVPRIVSERTFHLTSPTFEADAKMMVNTVCGIECQKELPTPSLSELEDYLSYETVFENGTRTLTRVKVQDLVFEPTQNTTKGASVRRKRQVYGTDSRFSILDKRFLTNFPFSTAVKLSTGCSGILISPQHVLTAAHCVHDGKDYVKGSKKLRVGLLKMRNKSGGKKRRGSKRSRRETSGGDQREGPREHLQDRVKAGRRRKQSGGGQRVSEGRPSFRWTRVKNTHIPKGWARGGMGDAALDYDYALLELKRAHKKKYMELGISPTIKKMPGGMIHFSGFDNDRADQLVYRFCSVSDESNDLLYQYCDAESGSTGSGVYLRLKDPDKKNWKRKIIAVYSGHQWVDVHGVQKDYNVAVRITPLKYAQICLWIHGNDANCAYG.

Positions 1–17 are cleaved as a signal peptide; the sequence is MLLWLIFFTPGWTLIDG. N-linked (GlcNAc...) asparagine glycans are attached at residues Asn87 and Asn107. In terms of domain architecture, Peptidase S1 spans 120–404; the sequence is VYGTDSRFSI…ICLWIHGNDA (285 aa). Cys150 and Cys166 are joined by a disulfide. The span at 188 to 203 shows a compositional bias: basic residues; the sequence is RNKSGGKKRRGSKRSR. A disordered region spans residues 188-246; it reads RNKSGGKKRRGSKRSRRETSGGDQREGPREHLQDRVKAGRRRKQSGGGQRVSEGRPSFR. The span at 204-224 shows a compositional bias: basic and acidic residues; that stretch reads RETSGGDQREGPREHLQDRVK.

Belongs to the peptidase S1 family.

The protein resides in the secreted. This Macaca mulatta (Rhesus macaque) protein is Inactive serine protease 35 (PRSS35).